The chain runs to 962 residues: Insulin-degrading enzyme homolog (962 aa).

The segment covering 1–10 (MVANEQQQQQ) has biased composition (low complexity). Residues 1–21 (MVANEQQQQQQEEERKEVKLI) form a disordered region. Position 74 (His-74) interacts with Zn(2+). The active-site Proton acceptor is the Glu-77. Residues His-78 and Glu-155 each coordinate Zn(2+).

Belongs to the peptidase M16 family. As to quaternary structure, homodimer. Zn(2+) serves as cofactor.

The protein resides in the cytoplasm. The chain is Insulin-degrading enzyme homolog from Dictyostelium discoideum (Social amoeba).